Here is a 366-residue protein sequence, read N- to C-terminus: Ferredoxin--NADP reductase (366 aa).

FAD is bound by residues D51, Q59, Y64, V104, F139, D308, and T349.

Belongs to the ferredoxin--NADP reductase type 2 family. In terms of assembly, homodimer. The cofactor is FAD.

It catalyses the reaction 2 reduced [2Fe-2S]-[ferredoxin] + NADP(+) + H(+) = 2 oxidized [2Fe-2S]-[ferredoxin] + NADPH. In Methylibium petroleiphilum (strain ATCC BAA-1232 / LMG 22953 / PM1), this protein is Ferredoxin--NADP reductase.